The sequence spans 47 residues: IgA-inducing protein (47 aa).

Residues 1–24 form the signal peptide; the sequence is MKKRSVSGCNITILAVVFSHLSAG.

As to expression, expressed in Peyer patches, spleen, thymus, liver and mesenteric lymph node. Expressed at high levels by dendritic cells, and at lower levels by T-cells, monocytes and B-cells.

It is found in the secreted. Functionally, enhances IgA secretion from B-cells stimulated via CD40. The protein is IgA-inducing protein (IGIP) of Bos taurus (Bovine).